Reading from the N-terminus, the 357-residue chain is Arginine kinase Pro c 2.0101 (357 aa).

The Phosphagen kinase N-terminal domain maps to 9–91 (KLEEGFKKLE…FDPIIEDYHK (83 aa)). 64 to 68 (GVGIY) lines the L-arginine pocket. In terms of domain architecture, Phosphagen kinase C-terminal spans 119-356 (FVISTRVRCG…LELIKIEKEM (238 aa)). Residues 122–126 (STRVR) and His185 each bind ATP. L-arginine is bound at residue Glu225. Arg229 serves as a coordination point for ATP. Cys271 lines the L-arginine pocket. ATP is bound by residues 280-284 (RASVH) and 309-314 (RGTRGE). Glu314 is an L-arginine binding site.

The protein belongs to the ATP:guanido phosphotransferase family. Post-translationally, glycosylated. In terms of tissue distribution, muscle (at protein level).

It carries out the reaction L-arginine + ATP = N(omega)-phospho-L-arginine + ADP + H(+). Its function is as follows. Catalyzes the reversible transfer of high energy ATP gamma-phosphate group to L-arginine. This Procambarus clarkii (Red swamp crayfish) protein is Arginine kinase Pro c 2.0101.